The following is an 820-amino-acid chain: MTHKLTPMMQQWHQCKEQAGDCLLLFRLGEFYEAFFDDALILAQNLDITLTQRQNVPMSGIPATCLDGYVDRLVSRGFKVAIAEQADNTEGSKGLVPRTINRLITPGALLSSSLLPEKANNYVLAINQVGSLYGLSCLDLSIGTFLVAEYDNTKDLIEAICRLAPTELLSHAKFYQKNEAVIKQLQQHLRITLSEYVSWAFEYQSATKKLYTCFQVSSLDGFGLQGLVPAINAAGALLSYIQDKLLLPISHLSIPKIYGQQKHLLIDKASQTNLELLSPIHGEHRKGSLLQVMERTSTPMGGRLLRNTLINPFYDLKEITLRQDSVEFFLQQADLRKILKRQLSCVRDLERLATKISTSLATPKDIGTLRDSLLSCTHIADNLQNCALPEFLENKFLIAPPLCSLIKTLSTELIQELPLKVSEGNIFANHYHPDLLRLRNIKENSKSWILEYQERIRNETGIKKLKVCYAQALGYYIEVASNLAPQLPKEFIRRQSRLHAERFTTQELQQFQDEVFSVEDKLQTLETKLFKELCFYIVEHRDLILKLSTAVADLDYVVSLAELAAEYDYRRPLVDHSDALSITKGMHPVALTLLDKGTFIPNDTVMHSAQTRMILLTGPNMAGKSTYIRQIALLVIMAQMGSFIPARSAHIGIVDKIFTRIGAGDNLSKGMSTFMVEMAETANILHNATDRSLVILDEIGRGTSTYDGLAIAQAVVEFLLFTDGKKAKTLFATHYKELTELEMHCQHVENFHAMVKENSGQPIFMYEIVKGHSKKSFGIHVAKLAGFPLSVVSRAQQILHQFEGPDLRPEPEKAQQLVMF.

Residue 618 to 625 (GPNMAGKS) participates in ATP binding.

It belongs to the DNA mismatch repair MutS family.

In terms of biological role, this protein is involved in the repair of mismatches in DNA. It is possible that it carries out the mismatch recognition step. This protein has a weak ATPase activity. The chain is DNA mismatch repair protein MutS from Chlamydia trachomatis serovar A (strain ATCC VR-571B / DSM 19440 / HAR-13).